The sequence spans 379 residues: Epoxyqueuosine reductase (379 aa).

Asp-139 acts as the Proton donor in catalysis. The region spanning 181 to 213 (IPLPVDQPVEEGCGKCVACMTICPTGAIVEPYT) is the 4Fe-4S ferredoxin-type domain. The [4Fe-4S] cluster site is built by Cys-193, Cys-196, Cys-199, Cys-203, Cys-219, Cys-246, Cys-249, and Cys-253.

This sequence belongs to the QueG family. As to quaternary structure, monomer. Cob(II)alamin is required as a cofactor. [4Fe-4S] cluster serves as cofactor.

The protein resides in the cytoplasm. The enzyme catalyses epoxyqueuosine(34) in tRNA + AH2 = queuosine(34) in tRNA + A + H2O. The protein operates within tRNA modification; tRNA-queuosine biosynthesis. Functionally, catalyzes the conversion of epoxyqueuosine (oQ) to queuosine (Q), which is a hypermodified base found in the wobble positions of tRNA(Asp), tRNA(Asn), tRNA(His) and tRNA(Tyr). This chain is Epoxyqueuosine reductase, found in Escherichia coli (strain K12).